The following is a 256-amino-acid chain: Transcription factor BHLH094 (256 aa).

Residues 1–125 (MDPAPSLAAE…TPPEPPKQDY (125 aa)) are disordered. Residues 79-97 (PEAKRLKPMKSSDKNDSLR) are compositionally biased toward basic and acidic residues. Residues 134-147 (QATDSHSLAERARR) form a basic motif; degenerate region. The 51-residue stretch at 134 to 184 (QATDSHSLAERARREKISERMKILQDLVPGCNKVIGKASVLDEIINYIQSL) folds into the bHLH domain. Residues 148 to 184 (EKISERMKILQDLVPGCNKVIGKASVLDEIINYIQSL) form a helix-loop-helix motif region.

The protein belongs to the bHLH protein family. As to quaternary structure, interacts with RSS3. Forms a ternary complex with RSS3 and TIFY11A/JAZ9 in the nucleus.

Its subcellular location is the nucleus. In terms of biological role, transcription factor that forms a ternary complex with RSS3 and TIFY11A/JAZ9 to negatively regulate jasmonate-responsive genes. The polypeptide is Transcription factor BHLH094 (Oryza sativa subsp. japonica (Rice)).